Reading from the N-terminus, the 302-residue chain is Probable 2-(5''-triphosphoribosyl)-3'-dephosphocoenzyme-A synthase 1 (302 aa).

The protein belongs to the CitG/MdcB family.

It carries out the reaction 3'-dephospho-CoA + ATP = 2'-(5''-triphospho-alpha-D-ribosyl)-3'-dephospho-CoA + adenine. This is Probable 2-(5''-triphosphoribosyl)-3'-dephosphocoenzyme-A synthase 1 from Salmonella typhimurium (strain LT2 / SGSC1412 / ATCC 700720).